The chain runs to 140 residues: Sex-regulated protein janus-B (140 aa).

Substrate is bound at residue Arg-42. His-69 (proton acceptor) is an active-site residue. 110–112 (SRT) lines the substrate pocket.

This sequence belongs to the janus family.

Functionally, janA and janB regulate somatic sex differentiation. This Drosophila yakuba (Fruit fly) protein is Sex-regulated protein janus-B (janB).